A 308-amino-acid chain; its full sequence is Probable GTP 3',8-cyclase (308 aa).

In terms of domain architecture, Radical SAM core spans 4 to 224; the sequence is RFGRPLEDLR…QIRKKHFRPR (221 aa). Arg-13 lines the GTP pocket. Positions 20, 24, and 27 each coordinate [4Fe-4S] cluster. Residue Lys-60 participates in GTP binding. Position 64 (Gly-64) interacts with S-adenosyl-L-methionine. Thr-90 lines the GTP pocket. Ser-114 is an S-adenosyl-L-methionine binding site. Position 151 (Lys-151) interacts with GTP. Cys-245 and Cys-248 together coordinate [4Fe-4S] cluster. Position 250–252 (250–252) interacts with GTP; that stretch reads RIR. Cys-262 contacts [4Fe-4S] cluster.

It belongs to the radical SAM superfamily. MoaA family. Requires [4Fe-4S] cluster as cofactor.

The enzyme catalyses GTP + AH2 + S-adenosyl-L-methionine = (8S)-3',8-cyclo-7,8-dihydroguanosine 5'-triphosphate + 5'-deoxyadenosine + L-methionine + A + H(+). It participates in cofactor biosynthesis; molybdopterin biosynthesis. Functionally, catalyzes the cyclization of GTP to (8S)-3',8-cyclo-7,8-dihydroguanosine 5'-triphosphate. The sequence is that of Probable GTP 3',8-cyclase from Saccharolobus islandicus (strain Y.N.15.51 / Yellowstone #2) (Sulfolobus islandicus).